A 352-amino-acid chain; its full sequence is 4-hydroxy-3-methylbut-2-enyl diphosphate reductase (352 aa).

[4Fe-4S] cluster is bound at residue Cys-36. 2 residues coordinate (2E)-4-hydroxy-3-methylbut-2-enyl diphosphate: His-76 and His-114. Residues His-76 and His-114 each contribute to the dimethylallyl diphosphate site. His-76 and His-114 together coordinate isopentenyl diphosphate. Cys-136 lines the [4Fe-4S] cluster pocket. (2E)-4-hydroxy-3-methylbut-2-enyl diphosphate is bound at residue His-164. His-164 is a dimethylallyl diphosphate binding site. Isopentenyl diphosphate is bound at residue His-164. Glu-166 acts as the Proton donor in catalysis. Position 204 (Thr-204) interacts with (2E)-4-hydroxy-3-methylbut-2-enyl diphosphate. Cys-234 is a binding site for [4Fe-4S] cluster. Positions 262, 263, 264, and 309 each coordinate (2E)-4-hydroxy-3-methylbut-2-enyl diphosphate. 4 residues coordinate dimethylallyl diphosphate: Ser-262, Ser-263, Asn-264, and Ser-309. Residues Ser-262, Ser-263, Asn-264, and Ser-309 each contribute to the isopentenyl diphosphate site.

It belongs to the IspH family. Requires [4Fe-4S] cluster as cofactor.

The enzyme catalyses isopentenyl diphosphate + 2 oxidized [2Fe-2S]-[ferredoxin] + H2O = (2E)-4-hydroxy-3-methylbut-2-enyl diphosphate + 2 reduced [2Fe-2S]-[ferredoxin] + 2 H(+). It carries out the reaction dimethylallyl diphosphate + 2 oxidized [2Fe-2S]-[ferredoxin] + H2O = (2E)-4-hydroxy-3-methylbut-2-enyl diphosphate + 2 reduced [2Fe-2S]-[ferredoxin] + 2 H(+). It participates in isoprenoid biosynthesis; dimethylallyl diphosphate biosynthesis; dimethylallyl diphosphate from (2E)-4-hydroxy-3-methylbutenyl diphosphate: step 1/1. It functions in the pathway isoprenoid biosynthesis; isopentenyl diphosphate biosynthesis via DXP pathway; isopentenyl diphosphate from 1-deoxy-D-xylulose 5-phosphate: step 6/6. Catalyzes the conversion of 1-hydroxy-2-methyl-2-(E)-butenyl 4-diphosphate (HMBPP) into a mixture of isopentenyl diphosphate (IPP) and dimethylallyl diphosphate (DMAPP). Acts in the terminal step of the DOXP/MEP pathway for isoprenoid precursor biosynthesis. The sequence is that of 4-hydroxy-3-methylbut-2-enyl diphosphate reductase from Bifidobacterium longum (strain NCC 2705).